Reading from the N-terminus, the 531-residue chain is Polyamine transporter PUT1 (531 aa).

The interval 1–76 is disordered; that stretch reads MADTGGRPEV…LPDGDAGGPM (76 aa). Residues 17 to 33 are compositionally biased toward low complexity; the sequence is SPGHPAASTTAAAAADL. Basic and acidic residues predominate over residues 34–44; that stretch reads GHADTGQEKPT. A run of 12 helical transmembrane segments spans residues 83–103, 113–133, 147–167, 193–213, 224–244, 262–284, 296–316, 341–361, 391–411, 414–434, 453–473, and 476–496; these read VSMIPLIFLIFYEVSGGPFGI, LLAIIGFLVLPVIWSIPEALI, YVVWVASALGPYWGFQQGWMK, LGGGAPRAFAVVGLTAVLTLL, VAICLGVFSLLPFFVMGLIAL, WNLYLNTLFWNLNYWDSISTLAG, ALFYAVIFVVVAYLYPLLAGT, AWLMWWVQSAAALSNMGMFVA, TPLAGILFSASGVLLLSMMSF, IVAAENFLYCFGMLLEFVAFI, TAGCVAMLVPPTALIAVVLAL, and LKVAVVSLGAVAMGLVLQPAL.

Belongs to the amino acid-polyamine-organocation (APC) superfamily. Polyamine:cation symporter (PHS) (TC 2.A.3.12) family. As to expression, expressed in seedling roots, leaves, stems, flowers and siliques.

The protein localises to the cell membrane. In terms of biological role, cell membrane polyamine/proton symporter involved in the polyamine uptake in cells. Possesses high affinity for spermidine and lower affinity for spermine and putrescine. Transports paraquat, a polyamine analog, and thus confers sensitivity to this chemical which is used as a herbicide. This chain is Polyamine transporter PUT1 (PUT1), found in Oryza sativa subsp. japonica (Rice).